We begin with the raw amino-acid sequence, 310 residues long: MRLISKVLVKTNCLEVGMRRAPQWYSHYSTTAGNARVNKKGSKVVPVLTGLALASIFAKKWYDDSQIKKADATSVAVDASISAFPKKMGPPQWPFSTQYELIGKGVRCVSSITFKAYGLGIYVAAEDKHLVSEVLDSKFLSQAFIDTAAPPSPENSHQDNLRTALNDPAKAPILINNLLDSGIRLMSKNTPIKAGSFKLLMDGTKKSVLKNPDSQSQDKDRLEAGFQELHDCFRSVKGLVARDDDFFIELNKDCSMNLSYYARKKDEFVILGTVKEPLIGKLLFAHYLAAVDPPSPEARKEVIDALVSLS.

Residues 1–20 (MRLISKVLVKTNCLEVGMRR) constitute a mitochondrion transit peptide.

This sequence belongs to the AIM18/AIM46 family.

It localises to the mitochondrion. This is Altered inheritance of mitochondria protein 46, mitochondrial (AIM46) from Saccharomyces cerevisiae (strain JAY291) (Baker's yeast).